A 464-amino-acid chain; its full sequence is 26S proteasome regulatory subunit 7 homolog B (464 aa).

Residue 246–253 (GPPGSGKT) coordinates ATP. Lys452 participates in a covalent cross-link: Glycyl lysine isopeptide (Lys-Gly) (interchain with G-Cter in ubiquitin).

Belongs to the AAA ATPase family. Component of the 19S regulatory particle (RP/PA700) base subcomplex of the 26S proteasome. The 26S proteasome is composed of a core protease (CP), known as the 20S proteasome, capped at one or both ends by the 19S regulatory particle (RP/PA700). The RP/PA700 complex is composed of at least 17 different subunits in two subcomplexes, the base and the lid, which form the portions proximal and distal to the 20S proteolytic core, respectively.

It localises to the cytoplasm. Its subcellular location is the nucleus. The 26S proteasome is involved in the ATP-dependent degradation of ubiquitinated proteins. The regulatory (or ATPase) complex confers ATP dependency and substrate specificity to the 26S complex. This is 26S proteasome regulatory subunit 7 homolog B (RPT1B) from Arabidopsis thaliana (Mouse-ear cress).